A 203-amino-acid polypeptide reads, in one-letter code: V-type ATP synthase subunit D (203 aa).

This sequence belongs to the V-ATPase D subunit family.

Functionally, produces ATP from ADP in the presence of a proton gradient across the membrane. This Thermotoga neapolitana (strain ATCC 49049 / DSM 4359 / NBRC 107923 / NS-E) protein is V-type ATP synthase subunit D.